Here is a 38-residue protein sequence, read N- to C-terminus: U-theraphotoxin-Aju1a (38 aa).

Cystine bridges form between Cys-3–Cys-24, Cys-7–Cys-30, and Cys-16–Cys-35.

In terms of tissue distribution, expressed by the venom gland.

The protein localises to the secreted. Its function is as follows. Has strong antifungal activity against C.albicans MDM8, C.krusei IOC 4559 (MIC=2.5-5 uM), C.glabrata IOC 45658 (MIC=2.5-5 uM), C.albicans IOC 45588 (MIC=2.5-5 uM), C.parapsilosis IOC 456416 (MIC=2.5-5 uM), C.tropicalis IOC 45608 (MIC=2.5-5 uM), C.guilliermondii IOC 455716 (MIC=2.5-5 uM) and A.niger (MIC=5-10 uM). Lacks antifungal activity against B.bassiana. Has no antibacterial effect against Gram-positive bacteria M.luteus, S.epidermidis, S.aureus or against Gram-negative bacteria E.coli and P.aeruginosa. Has no hemolytic activity against human erythrocytes. Probable ion channel inhibitor. The protein is U-theraphotoxin-Aju1a of Avicularia juruensis (Yellow-banded pinktoe).